We begin with the raw amino-acid sequence, 209 residues long: Large ribosomal subunit protein uL4 (209 aa).

Residues 50–89 are disordered; sequence MTKTKGLVSGGGKKPFKQKGTGGARQGSSRSILMPGGGTA.

This sequence belongs to the universal ribosomal protein uL4 family. In terms of assembly, part of the 50S ribosomal subunit.

Its function is as follows. One of the primary rRNA binding proteins, this protein initially binds near the 5'-end of the 23S rRNA. It is important during the early stages of 50S assembly. It makes multiple contacts with different domains of the 23S rRNA in the assembled 50S subunit and ribosome. In terms of biological role, forms part of the polypeptide exit tunnel. The chain is Large ribosomal subunit protein uL4 from Bdellovibrio bacteriovorus (strain ATCC 15356 / DSM 50701 / NCIMB 9529 / HD100).